The following is a 340-amino-acid chain: Coproporphyrin III ferrochelatase (340 aa).

Residues serine 52 and tyrosine 116 each coordinate Fe-coproporphyrin III. The Fe(2+) site is built by histidine 172 and glutamate 255.

Belongs to the ferrochelatase family.

The protein localises to the cytoplasm. The catalysed reaction is Fe-coproporphyrin III + 2 H(+) = coproporphyrin III + Fe(2+). It functions in the pathway porphyrin-containing compound metabolism; protoheme biosynthesis. In terms of biological role, involved in coproporphyrin-dependent heme b biosynthesis. Catalyzes the insertion of ferrous iron into coproporphyrin III to form Fe-coproporphyrin III. This is Coproporphyrin III ferrochelatase from Mycobacterium marinum (strain ATCC BAA-535 / M).